The primary structure comprises 498 residues: Trehalose-6-phosphate synthase (498 aa).

Residue arginine 28 coordinates D-glucose 6-phosphate. 48–49 (GG) lines the UDP-alpha-D-glucose pocket. D-glucose 6-phosphate is bound by residues tyrosine 106 and aspartate 160. Arginine 302 and lysine 307 together coordinate UDP-alpha-D-glucose. Arginine 340 is a D-glucose 6-phosphate binding site. Position 405–409 (405–409 (LVAKE)) interacts with UDP-alpha-D-glucose.

It belongs to the glycosyltransferase 20 family. Homotetramer.

It carries out the reaction ADP-alpha-D-glucose + D-glucose 6-phosphate = alpha,alpha-trehalose 6-phosphate + ADP + H(+). The enzyme catalyses CDP-alpha-D-glucose + D-glucose 6-phosphate = alpha,alpha-trehalose 6-phosphate + CDP + H(+). The catalysed reaction is GDP-alpha-D-glucose + D-glucose 6-phosphate = alpha,alpha-trehalose 6-phosphate + GDP + H(+). It catalyses the reaction TDP-alpha-D-glucose + D-glucose 6-phosphate = 5-methyl-UDP + alpha,alpha-trehalose 6-phosphate + H(+). It carries out the reaction D-glucose 6-phosphate + UDP-alpha-D-glucose = alpha,alpha-trehalose 6-phosphate + UDP + H(+). The protein operates within glycan biosynthesis; trehalose biosynthesis. Its function is as follows. Probably involved in the osmoprotection via the biosynthesis of trehalose and in the production of glycogen and alpha-glucan via the TreS-Pep2 branch involved in the biosynthesis of maltose-1-phosphate (M1P). Catalyzes the transfer of glucose from UDP-glucose (UDP-Glc) to D-glucose 6-phosphate (Glc-6-P) to form trehalose-6-phosphate. Probably also able to use ADP-Glc, CDP-Glc, GDP-Glc and TDP-Glc as glucosyl donors. This is Trehalose-6-phosphate synthase from Mycobacterium leprae (strain TN).